Reading from the N-terminus, the 467-residue chain is Hydroxymethylglutaryl-CoA synthase erg13A (467 aa).

A35 lines the (3S)-3-hydroxy-3-methylglutaryl-CoA pocket. E86 serves as the catalytic Proton donor/acceptor. (3S)-3-hydroxy-3-methylglutaryl-CoA contacts are provided by C118, T160, S209, H259, K268, N334, and S368. Catalysis depends on C118, which acts as the Acyl-thioester intermediate. Residue H259 is the Proton donor/acceptor of the active site.

This sequence belongs to the thiolase-like superfamily. HMG-CoA synthase family.

It catalyses the reaction acetoacetyl-CoA + acetyl-CoA + H2O = (3S)-3-hydroxy-3-methylglutaryl-CoA + CoA + H(+). It participates in metabolic intermediate biosynthesis; (R)-mevalonate biosynthesis; (R)-mevalonate from acetyl-CoA: step 2/3. In terms of biological role, hydroxymethylglutaryl-CoA synthase; part of the first module of ergosterol biosynthesis pathway that includes the early steps of the pathway, conserved across all eukaryotes, and which results in the formation of mevalonate from acetyl-coenzyme A (acetyl-CoA). Erg13A and erg13B condense acetyl-CoA with acetoacetyl-CoA to form hydroxymethylglutaryl-CoA (HMG-CoA). The first module starts with the action of the cytosolic acetyl-CoA acetyltransferase erg10B that catalyzes the formation of acetoacetyl-CoA. The hydroxymethylglutaryl-CoA synthases erg13A and erg13B then condense acetyl-CoA with acetoacetyl-CoA to form HMG-CoA. The rate-limiting step of the early module is the reduction to mevalonate by the 3-hydroxy-3-methylglutaryl-coenzyme A (HMG-CoA) reductases hmg1 and hmg2. Mevalonate is also a precursor for the extracellular siderophore triacetylfusarinine C (TAFC). This is Hydroxymethylglutaryl-CoA synthase erg13A from Aspergillus fumigatus (strain ATCC MYA-4609 / CBS 101355 / FGSC A1100 / Af293) (Neosartorya fumigata).